The sequence spans 101 residues: Small ribosomal subunit protein uS14A (101 aa).

It belongs to the universal ribosomal protein uS14 family. As to quaternary structure, part of the 30S ribosomal subunit. Contacts proteins S3 and S10.

Functionally, binds 16S rRNA, required for the assembly of 30S particles and may also be responsible for determining the conformation of the 16S rRNA at the A site. This Mycolicibacterium smegmatis (strain ATCC 700084 / mc(2)155) (Mycobacterium smegmatis) protein is Small ribosomal subunit protein uS14A.